Consider the following 163-residue polypeptide: Probable chemoreceptor glutamine deamidase CheD (163 aa).

The protein belongs to the CheD family.

It catalyses the reaction L-glutaminyl-[protein] + H2O = L-glutamyl-[protein] + NH4(+). In terms of biological role, probably deamidates glutamine residues to glutamate on methyl-accepting chemotaxis receptors (MCPs), playing an important role in chemotaxis. The sequence is that of Probable chemoreceptor glutamine deamidase CheD from Borrelia garinii subsp. bavariensis (strain ATCC BAA-2496 / DSM 23469 / PBi) (Borreliella bavariensis).